Reading from the N-terminus, the 199-residue chain is Biogenesis of lysosome-related organelles complex 1 subunit 3 (199 aa).

Residues 1–11 show a composition bias toward basic residues; the sequence is MASQSRRRRPL. Positions 1–81 are disordered; the sequence is MASQSRRRRP…AAPRDLPPLV (81 aa). Acidic residues predominate over residues 23 to 38; sequence AETDSELSASSEEEEL. A compositionally biased stretch (low complexity) spans 39 to 54; the sequence is YLGPSGPTRGRPTGLR. The residue at position 62 (Thr-62) is a Phosphothreonine. Ser-64 is modified (phosphoserine).

The protein belongs to the BLOC1S3 family. Component of the biogenesis of lysosome-related organelles complex 1 (BLOC-1) composed of BLOC1S1, BLOC1S2, BLOC1S3, BLOC1S4, BLOC1S5, BLOC1S6, DTNBP1/BLOC1S7 and SNAPIN/BLOC1S8. Octamer composed of one copy each BLOC1S1, BLOC1S2, BLOC1S3, BLOC1S4, BLOC1S5, BLOC1S6, DTNBP1/BLOC1S7 and SNAPIN/BLOC1S8. The BLOC-1 complex associates with the AP-3 protein complex and membrane protein cargos. Interacts directly with BLOC1S2. Interacts with BLOC1S4, BLOC1S5 and BLOC1S6. In terms of processing, phosphorylated.

It localises to the cytoplasm. In terms of biological role, component of the BLOC-1 complex, a complex that is required for normal biogenesis of lysosome-related organelles (LRO), such as platelet dense granules and melanosomes. In concert with the AP-3 complex, the BLOC-1 complex is required to target membrane protein cargos into vesicles assembled at cell bodies for delivery into neurites and nerve terminals. The BLOC-1 complex, in association with SNARE proteins, is also proposed to be involved in neurite extension. Plays a role in intracellular vesicle trafficking. The polypeptide is Biogenesis of lysosome-related organelles complex 1 subunit 3 (BLOC1S3) (Sus scrofa (Pig)).